Reading from the N-terminus, the 76-residue chain is MSRRPKIEEAMKRVESRYELVHAAVRRTLQLLREGEDFFVQEGGEVHKKTFAAIEDIAEGKVKIIKKKEESGSKEE.

The protein belongs to the RNA polymerase subunit omega family. As to quaternary structure, the RNAP catalytic core consists of 2 alpha, 1 beta, 1 beta' and 1 omega subunit. When a sigma factor is associated with the core the holoenzyme is formed, which can initiate transcription.

The enzyme catalyses RNA(n) + a ribonucleoside 5'-triphosphate = RNA(n+1) + diphosphate. Functionally, promotes RNA polymerase assembly. Latches the N- and C-terminal regions of the beta' subunit thereby facilitating its interaction with the beta and alpha subunits. This Aquifex aeolicus (strain VF5) protein is DNA-directed RNA polymerase subunit omega (rpoZ).